The sequence spans 118 residues: Small ribosomal subunit protein uS13 (118 aa).

Positions 91–118 (HRHSLPVRGQRTKTNARTRKGPRKPIRK) are disordered.

It belongs to the universal ribosomal protein uS13 family. In terms of assembly, part of the 30S ribosomal subunit. Forms a loose heterodimer with protein S19. Forms two bridges to the 50S subunit in the 70S ribosome.

In terms of biological role, located at the top of the head of the 30S subunit, it contacts several helices of the 16S rRNA. In the 70S ribosome it contacts the 23S rRNA (bridge B1a) and protein L5 of the 50S subunit (bridge B1b), connecting the 2 subunits; these bridges are implicated in subunit movement. Contacts the tRNAs in the A and P-sites. In Hahella chejuensis (strain KCTC 2396), this protein is Small ribosomal subunit protein uS13.